Here is a 483-residue protein sequence, read N- to C-terminus: Phloretin 2'-O-glucosyltransferase (483 aa).

The active-site Proton acceptor is His15. His15 contacts an anthocyanidin. Catalysis depends on Asp118, which acts as the Charge relay. Thr140, Ala360, Gln362, His377, Trp380, Asn381, Ser382, and Glu385 together coordinate UDP-alpha-D-glucose. Residue Ala400 participates in an anthocyanidin binding. Positions 401 and 402 each coordinate UDP-alpha-D-glucose.

This sequence belongs to the UDP-glycosyltransferase family.

It catalyses the reaction phloretin + UDP-alpha-D-glucose = phlorizin + UDP + H(+). Glycosyltransferase that possesses phloretin 2'-O-glycosyltransferase activity. Converts phloretin to phlorizin (phloretin 2'-O-glucoside), a potent antioxidant. Is specific for phloretin and does not possess glycosyltransferase activity toward naringenin, naringenin chalcone, eriodictyol, eriodictyol chalcone, apigenin, luteolin, kaempferol, quercetin, isoliquiritigenin, butein, caffeic acid, 2-coumaric acid, 3-coumaric acid, 3-hydroxybenzoic acid, 3,4-dihydroxybenzoic acid and 3,4-dihydroxyhydrocinnamic acid. Can glycosylate phloretin in the presence of UDP-glucose, UDP-xylose and UDP-galactose. This is Phloretin 2'-O-glucosyltransferase from Pyrus communis (Pear).